We begin with the raw amino-acid sequence, 819 residues long: Lon protease (819 aa).

A compositionally biased stretch (polar residues) spans Met-1–Pro-14. A disordered region spans residues Met-1–Ser-40. The segment covering Glu-18–Pro-38 has biased composition (basic and acidic residues). In terms of domain architecture, Lon N-terminal spans Leu-42 to Leu-239. ATP is bound at residue Gly-392–Thr-399. One can recognise a Lon proteolytic domain in the interval Lys-634 to Gly-818. Catalysis depends on residues Ser-724 and Lys-767.

The protein belongs to the peptidase S16 family. Homohexamer. Organized in a ring with a central cavity.

The protein resides in the cytoplasm. It carries out the reaction Hydrolysis of proteins in presence of ATP.. Its function is as follows. ATP-dependent serine protease that mediates the selective degradation of mutant and abnormal proteins as well as certain short-lived regulatory proteins. Required for cellular homeostasis and for survival from DNA damage and developmental changes induced by stress. Degrades polypeptides processively to yield small peptide fragments that are 5 to 10 amino acids long. Binds to DNA in a double-stranded, site-specific manner. This Chlamydia trachomatis serovar D (strain ATCC VR-885 / DSM 19411 / UW-3/Cx) protein is Lon protease.